The following is a 1481-amino-acid chain: Cystic fibrosis transmembrane conductance regulator (1481 aa).

The Cytoplasmic segment spans residues 1–77 (MQRSPLEKAS…KLINALRRCF (77 aa)). Residues 78–98 (FWRFMFYGILLYLGEVTKAVQ) form a helical membrane-spanning segment. Positions 81–365 (FMFYGILLYL…WAVQTWYDSL (285 aa)) constitute an ABC transmembrane type-1 1 domain. At 99 to 122 (PLLLGRIIASYDPDNKEERSIAIY) the chain is on the extracellular side. The helical transmembrane segment at 123–146 (LGIGLCLLFIVRTLLLHPAIFGLH) threads the bilayer. At 147–195 (HIGMQMRIAMFSLIYKKTLKLSSRVLDKISIGQLVSLLSNNLNKFDEGL) the chain is on the cytoplasmic side. The chain crosses the membrane as a helical span at residues 196-216 (ALAHFVWIVPLQVALLMGLIW). The Extracellular segment spans residues 217 to 222 (ELLQAS). Residues 223-243 (AFCGLGFLIVLALFQAGLGRM) form a helical membrane-spanning segment. Residues 244–298 (MMKYRDQRAGKINERLVITSEMIENIQSVKAYCWEEAMEKMIENLRQTELKLTRK) are Cytoplasmic-facing. A helical membrane pass occupies residues 299 to 319 (AAYVRYFNSSAFFFSGFFVVF). Residues 320–339 (LSVLPYALIKGIVLRKIFTT) lie on the Extracellular side of the membrane. The helical transmembrane segment at 340-358 (ISFCIVLRMAVTRQFPWAV) threads the bilayer. The Cytoplasmic portion of the chain corresponds to 359–858 (QTWYDSLGAI…YLRYITVHKS (500 aa)). Residues Trp401, Ser434, 458-465 (GSTGAGKT), and Gln493 each bind ATP. The ABC transporter 1 domain maps to 423–646 (NDDDSLFFSN…RPDFSSKLMG (224 aa)). A lipid anchor (S-palmitoyl cysteine) is attached at Cys524. Residues Ser549 and Ser660 each carry the phosphoserine modification. The tract at residues 654 to 831 (SAERRNSILT…EEINEEDLKE (178 aa)) is disordered R region. Position 670 is a phosphoserine; by PKA (Ser670). At Ser686 the chain carries Phosphoserine. Residue Lys688 forms a Glycyl lysine isopeptide (Lys-Gly) (interchain with G-Cter in ubiquitin) linkage. Ser700 and Ser712 each carry phosphoserine. At Thr717 the chain carries Phosphothreonine. 6 positions are modified to phosphoserine: Ser737, Ser753, Ser768, Ser790, Ser795, and Ser813. Residues 859-879 (LIFVLIWCLVIFLAEVAASLV) traverse the membrane as a helical segment. One can recognise an ABC transmembrane type-1 2 domain in the interval 859–1155 (LIFVLIWCLV…AVNSSIDVDS (297 aa)). Over 880 to 918 (VLWFLGNTPPQDKGNSTYSRNNSYAVIITRTSSYYVFYI) the chain is Extracellular. 2 N-linked (GlcNAc...) asparagine glycosylation sites follow: Asn894 and Asn900. Residues 919 to 939 (YVGVADTLLAMGFFRGLPLVH) form a discontinuously helical membrane-spanning segment. The Cytoplasmic segment spans residues 940–990 (TLITVSKILHHKMLHSVLQAPMSTLNTLKAGGILNRFSKDIAILDDLLPLT). The chain crosses the membrane as a helical span at residues 991 to 1011 (IFDFIQLLLIVIGAIAVVAVL). Residues 1012-1013 (QP) are Extracellular-facing. Residues 1014-1034 (YIFVATVPVIVAFIMLRAYFL) traverse the membrane as a helical segment. Residues 1035–1095 (QTSQQLKQLE…TANWFLYLST (61 aa)) are Cytoplasmic-facing. Residues 1096–1116 (LRWFQMRIEMIFVIFFIAVTF) traverse the membrane as a helical segment. Over 1117–1130 (ISILTTGEGEGTVG) the chain is Extracellular. A helical membrane pass occupies residues 1131–1151 (IILTLAMNIMSTLQWAVNSSI). Topologically, residues 1152 to 1481 (DVDSLMRSVS…TEEEVQDTRL (330 aa)) are cytoplasmic. Residues 1211-1444 (MTVKDLTAKY…RSLFQQAISP (234 aa)) form the ABC transporter 2 domain. Residues Tyr1220 and 1245-1252 (GRTGSGKS) contribute to the ATP site. The tract at residues 1387–1481 (RTLKQAFADC…TEEEVQDTRL (95 aa)) is interaction with GORASP2. The S-palmitoyl cysteine moiety is linked to residue Cys1396. Ser1445 and Ser1457 each carry phosphoserine. The short motif at 1479-1481 (TRL) is the PDZ-binding element.

This sequence belongs to the ABC transporter superfamily. ABCC family. CFTR transporter (TC 3.A.1.202) subfamily. In terms of assembly, monomer; does not require oligomerization for channel activity. May form oligomers in the membrane. Interacts with SLC26A3, SLC26A6 and NHERF1. Interacts with SHANK2. Interacts with MYO6. Interacts (via C-terminus) with GOPC (via PDZ domain); this promotes CFTR internalization and thereby decreases channel activity. Interacts with SLC4A7 through NHERF1. Found in a complex with MYO5B and RAB11A. Interacts with ANO1. Interacts with SLC26A8. Interacts with AHCYL1; the interaction increases CFTR activity. Interacts with CSE1L. The core-glycosylated form interacts with GORASP2 (via PDZ GRASP-type 1 domain) in respone to ER stress. Interacts with MARCHF2; the interaction leads to CFTR ubiqtuitination and degradation. Interacts with ADGRG2. In terms of processing, N-glycosylated. Post-translationally, phosphorylated; cAMP treatment promotes phosphorylation and activates the channel. Dephosphorylation decreases the ATPase activity (in vitro). Phosphorylation at PKA sites activates the channel. Phosphorylation at PKC sites enhances the response to phosphorylation by PKA. Phosphorylated by AMPK; this inhibits channel activity. Ubiquitinated, leading to its degradation in the lysosome. Deubiquitination by USP10 in early endosomes enhances its endocytic recycling to the cell membrane. Ubiquitinated by RNF185 during ER stress. Ubiquitinated by MARCHF2.

It is found in the apical cell membrane. The protein localises to the early endosome membrane. Its subcellular location is the cell membrane. The protein resides in the recycling endosome membrane. It localises to the endoplasmic reticulum membrane. It is found in the nucleus. The catalysed reaction is ATP + H2O + closed Cl(-) channel = ADP + phosphate + open Cl(-) channel.. It catalyses the reaction chloride(in) = chloride(out). The enzyme catalyses hydrogencarbonate(in) = hydrogencarbonate(out). It carries out the reaction ATP + H2O = ADP + phosphate + H(+). Functionally, epithelial ion channel that plays an important role in the regulation of epithelial ion and water transport and fluid homeostasis. Mediates the transport of chloride ions across the cell membrane. Possesses an intrinsic ATPase activity and utilizes ATP to gate its channel; the passive flow of anions through the channel is gated by cycles of ATP binding and hydrolysis by the ATP-binding domains. The ion channel is also permeable to HCO(3)(-); selectivity depends on the extracellular chloride concentration. Exerts its function also by modulating the activity of other ion channels and transporters. Contributes to the regulation of the pH and the ion content of the epithelial fluid layer. Modulates the activity of the epithelial sodium channel (ENaC) complex, in part by regulating the cell surface expression of the ENaC complex. May regulate bicarbonate secretion and salvage in epithelial cells by regulating the transporter SLC4A7. Can inhibit the chloride channel activity of ANO1. Plays a role in the chloride and bicarbonate homeostasis during sperm epididymal maturation and capacitation. The chain is Cystic fibrosis transmembrane conductance regulator from Macaca nemestrina (Pig-tailed macaque).